The primary structure comprises 478 residues: Glutamine synthetase (478 aa).

K14 participates in a covalent cross-link: Isoglutamyl lysine isopeptide (Lys-Gln) (interchain with Q-Cter in protein Pup). The GS beta-grasp domain maps to 16-100 (ENVEYVDIRF…MNFFVHDPFT (85 aa)). A GS catalytic domain is found at 108-478 (PRNVARKAEN…PYEFSLYYDV (371 aa)). E133 and E135 together coordinate Mg(2+). E214 is a binding site for ATP. Residues E219 and E227 each contribute to the Mg(2+) site. 230 to 232 (YKF) serves as a coordination point for ATP. Residues 271 to 272 (NG) and G272 contribute to the L-glutamate site. H276 serves as a coordination point for Mg(2+). ATP contacts are provided by residues 278–280 (HQS) and S280. L-glutamate contacts are provided by R329, E335, and R347. ATP-binding residues include R347, R352, and K361. E366 serves as a coordination point for Mg(2+). Position 368 (R368) interacts with L-glutamate. An O-AMP-tyrosine modification is found at Y406.

This sequence belongs to the glutamine synthetase family. In terms of assembly, oligomer of 12 subunits arranged in the form of two hexagons. Mg(2+) serves as cofactor.

It localises to the cytoplasm. It carries out the reaction L-glutamate + NH4(+) + ATP = L-glutamine + ADP + phosphate + H(+). With respect to regulation, when cellular nitrogen levels are high, the C-terminal adenylyl transferase (AT) of GlnE inhibits GlnA by covalent transfer of an adenylyl group from ATP to Tyr-406. Conversely, when nitrogen levels are low, the N-terminal adenylyl removase (AR) of GlnE activates GlnA by removing the adenylyl group by phosphorolysis. The fully adenylated enzyme complex is inactive. In terms of biological role, involved in nitrogen metabolism via ammonium assimilation. Catalyzes the ATP-dependent biosynthesis of glutamine from glutamate and ammonia. The polypeptide is Glutamine synthetase (Mycolicibacterium smegmatis (strain ATCC 700084 / mc(2)155) (Mycobacterium smegmatis)).